Here is a 539-residue protein sequence, read N- to C-terminus: Inosine-5'-monophosphate dehydrogenase (539 aa).

CBS domains are found at residues 140-196 (IIVN…DMPI) and 200-257 (MTRE…PRAC). NAD(+)-binding positions include Asp292 and 343-345 (GIG). Residues Gly345 and Gly347 each contribute to the K(+) site. IMP is bound at residue Ser348. Cys350 is a K(+) binding site. Cys350 acts as the Thioimidate intermediate in catalysis. IMP is bound by residues 383–385 (DGG), 406–407 (GS), and 430–434 (YRGMG). Arg446 (proton acceptor) is an active-site residue. Glu460 is an IMP binding site. 2 residues coordinate K(+): Glu514 and His516. Residues 517 to 539 (PHDIAITQEAPNYSPDVHSGDAG) form a disordered region.

Belongs to the IMPDH/GMPR family. In terms of assembly, homotetramer. K(+) is required as a cofactor.

It catalyses the reaction IMP + NAD(+) + H2O = XMP + NADH + H(+). It participates in purine metabolism; XMP biosynthesis via de novo pathway; XMP from IMP: step 1/1. Its activity is regulated as follows. Mycophenolic acid (MPA) is a non-competitive inhibitor that prevents formation of the closed enzyme conformation by binding to the same site as the amobile flap. In contrast, mizoribine monophosphate (MZP) is a competitive inhibitor that induces the closed conformation. MPA is a potent inhibitor of mammalian IMPDHs but a poor inhibitor of the bacterial enzymes. MZP is a more potent inhibitor of bacterial IMPDH. In terms of biological role, catalyzes the conversion of inosine 5'-phosphate (IMP) to xanthosine 5'-phosphate (XMP), the first committed and rate-limiting step in the de novo synthesis of guanine nucleotides, and therefore plays an important role in the regulation of cell growth. The chain is Inosine-5'-monophosphate dehydrogenase from Rhodopirellula baltica (strain DSM 10527 / NCIMB 13988 / SH1).